Reading from the N-terminus, the 204-residue chain is Elongation factor Ts (204 aa).

Residues 80–83 (TDFV) form an involved in Mg(2+) ion dislocation from EF-Tu region.

This sequence belongs to the EF-Ts family.

The protein resides in the cytoplasm. Its function is as follows. Associates with the EF-Tu.GDP complex and induces the exchange of GDP to GTP. It remains bound to the aminoacyl-tRNA.EF-Tu.GTP complex up to the GTP hydrolysis stage on the ribosome. The protein is Elongation factor Ts of Caldicellulosiruptor saccharolyticus (strain ATCC 43494 / DSM 8903 / Tp8T 6331).